Consider the following 90-residue polypeptide: Toxin 3FTx-Psa1 (90 aa).

An N-terminal signal peptide occupies residues M1–T21. Intrachain disulfides connect C24–C43, C36–C61, C65–C76, and C77–C82.

It belongs to the three-finger toxin family. Ancestral subfamily. As to expression, expressed by the venom gland.

Its subcellular location is the secreted. The sequence is that of Toxin 3FTx-Psa1 from Psammophis mossambicus (Olive sand snake).